The chain runs to 49 residues: Large ribosomal subunit protein bL32c (49 aa).

The segment at 1 to 23 (MTPKKRKSKSKKNLRKTNWKKKA) is disordered.

This sequence belongs to the bacterial ribosomal protein bL32 family.

The protein localises to the plastid. It is found in the chloroplast. This chain is Large ribosomal subunit protein bL32c, found in Oltmannsiellopsis viridis (Marine flagellate).